A 422-amino-acid chain; its full sequence is uncharacterized protein (422 aa).

Residues S124, S126, and S151 each carry the phosphoserine modification. Positions T144–K166 are disordered. K250 is covalently cross-linked (Glycyl lysine isopeptide (Lys-Gly) (interchain with G-Cter in SUMO2)). 2 disordered regions span residues A251 to S285 and G299 to A324. The span at E271–N282 shows a compositional bias: acidic residues. 2 positions are modified to phosphoserine: S280 and S306. Over residues A310–A324 the composition is skewed to low complexity. At S351 the chain carries Phosphoserine.

This is an uncharacterized protein from Homo sapiens (Human).